Reading from the N-terminus, the 524-residue chain is Cytochrome P450 monooxygenase alt1 (524 aa).

The chain crosses the membrane as a helical span at residues 24-44; that stretch reads IANMLSVIAFSICISPIVYFL. A heme-binding site is contributed by Cys-469.

Belongs to the cytochrome P450 family. It depends on heme as a cofactor.

It is found in the membrane. It functions in the pathway secondary metabolite biosynthesis. Its function is as follows. Cytochrome P450 monooxygenase; part of the gene cluster that mediates the biosynthesis of alternapyrone derivatives. Alternapyrone is a decaketide with octa-methylation from methionine on every C2 unit except the third unit. All the domains in the polyketide synthase alt5 are apparently involved in alternapyrone synthesis, that is, the 8 CMeT, 7 KR, 7 DH, and 4 ER reactions in the 9 KS-mediated condensation steps required for alternapyrone synthesis. the alternapyrone produced by alt5 might be intensively modified by cytochrome P450 monooxygenases alt1, alt2 and alt3 and FAD-dependent oxidoreductase alt4 present in the alt gene cluster. This Alternaria solani protein is Cytochrome P450 monooxygenase alt1.